A 788-amino-acid polypeptide reads, in one-letter code: IQ motif and ubiquitin-like domain-containing protein (788 aa).

The tract at residues 1–89 is disordered; sequence MSDPEEERVA…SLGSASGSQD (89 aa). The segment covering 7-20 has biased composition (basic and acidic residues); it reads ERVADSTAHYEEAG. A compositionally biased stretch (acidic residues) spans 31-54; the sequence is EAEGSDVMPEQDDEVQELTTESEE. Residues 68-78 show a composition bias toward basic and acidic residues; it reads KSDDSKPREEV. The span at 80–89 shows a compositional bias: polar residues; sequence SLGSASGSQD. Positions 127–203 constitute a Ubiquitin-like domain; the sequence is ATVKIVLIPA…VQVEVFSTLP (77 aa). Residues 334-363 enclose the IQ domain; it reads RLHAVIVIQTSYRRWHAKRYVESLRKQKKL.

In terms of assembly, component of the axonemal radial spoke 1 (RS1) complex, at least composed of spoke head proteins RSPH1, RSPH3B, RSPH9 and the cilia-specific component RSPH4A or sperm-specific component RSPH6A, spoke stalk proteins RSPH14, DNAJB13, DYDC1, ROPN1L and NME5, and the anchor protein IQUB. Does not appear to be part of radial spoke complexes 2 or 3 (RS2 or RS3). Interacts with CALM1. Interacts with DNAJB13. Interacts with DYNLL2. Interacts with NME5. Interacts with RSPH3. Interacts with RSPH9. Interacts with ZMYND10. Interacts with calmodulin; the interaction occurs in conditions of low but not high calcium. As to expression, expressed in the flagellum of sperm cells and cilia of tracheal epithelial cells (at protein level). High expression in testis, also present in brain and lung.

Its subcellular location is the cytoplasm. The protein resides in the cytoskeleton. It localises to the flagellum axoneme. It is found in the cell projection. The protein localises to the cilium. Its function is as follows. Anchors the radial spoke 1 (RS1) complex to the A microtubule of outer doublet microtubules in axonemes. The triple radial spokes (RS1, RS2 and RS3) are required to modulate beating of the sperm flagellum. May play a role in inhibiting signaling via MAPK1/ERK2 and MAPK3/ERK1. Additionally, may play a role in the functioning of cilia. Not required for the functioning of tracheal or ependymal cilia. The polypeptide is IQ motif and ubiquitin-like domain-containing protein (Iqub) (Mus musculus (Mouse)).